The following is a 398-amino-acid chain: Lysophospholipid acyltransferase LPEAT1 (398 aa).

The segment at 1–24 is disordered; the sequence is MESELKDLNSNSNPPSSKEDRPLL. Serine 28 is subject to Phosphoserine. The helical transmembrane segment at 66-86 threads the bilayer; sequence LAVALVTLVPLRFLLSMSILL. The segment at 158–185 is disordered; it reads RDSDMDSNPKTTSTEINQKGEAATEEPE. A compositionally biased stretch (polar residues) spans 163 to 174; the sequence is DSNPKTTSTEIN. Positions 194–199 match the HXXXXD motif motif; that stretch reads HVSYLD.

Belongs to the 1-acyl-sn-glycerol-3-phosphate acyltransferase family.

Its subcellular location is the endoplasmic reticulum membrane. The catalysed reaction is a 1-acyl-sn-glycero-3-phosphoethanolamine + an acyl-CoA = a 1,2-diacyl-sn-glycero-3-phosphoethanolamine + CoA. It catalyses the reaction a 1-acyl-sn-glycero-3-phosphate + an acyl-CoA = a 1,2-diacyl-sn-glycero-3-phosphate + CoA. The enzyme catalyses a 1-acyl-sn-glycero-3-phosphocholine + an acyl-CoA = a 1,2-diacyl-sn-glycero-3-phosphocholine + CoA. It carries out the reaction a 1-acyl-sn-glycero-3-phospho-L-serine + an acyl-CoA = a 1,2-diacyl-sn-glycero-3-phospho-L-serine + CoA. It participates in lipid metabolism; phospholipid metabolism. Possesses acyl-CoA-dependent lysophospholipid acyltransferase activity with a subset of lysophospholipids as substrates. Exhibits strong acylation activity on lysophosphatidylethanolamine (LPE) and lysophosphatidate (LPA), and lower activity on lysophosphatidylcholine (LPC) and lysophosphatidylserine (LPS). Exhibits acylation activity on both LPE and LPC. Has a preference for 18:1-LPE over 16:0-LPE as acceptor. Palmitoyl-CoA (16:0-CoA) is a better acyl donor than oleoyl-CoA (18:1-CoA). Among several different acyl-CoA species the best acyl donor is palmitoyl-CoA (16:0-CoA). Activity is calcium-independent. Its activity is essential for maintaining adequate levels of phosphatidylethanolamine (PE), LPE and LPC in the cells, which is crucial for plant growth regulation. In Arabidopsis thaliana (Mouse-ear cress), this protein is Lysophospholipid acyltransferase LPEAT1.